Here is a 949-residue protein sequence, read N- to C-terminus: Valine--tRNA ligase (949 aa).

A 'HIGH' region motif is present at residues 45 to 55 (PNVTGVLHMGH). Positions 561–565 (KMSKS) match the 'KMSKS' region motif. Position 564 (lysine 564) interacts with ATP. Residues 882–949 (EELLKQEKTR…EIKEKLMTLP (68 aa)) adopt a coiled-coil conformation.

This sequence belongs to the class-I aminoacyl-tRNA synthetase family. ValS type 1 subfamily. Monomer.

It is found in the cytoplasm. The enzyme catalyses tRNA(Val) + L-valine + ATP = L-valyl-tRNA(Val) + AMP + diphosphate. Catalyzes the attachment of valine to tRNA(Val). As ValRS can inadvertently accommodate and process structurally similar amino acids such as threonine, to avoid such errors, it has a 'posttransfer' editing activity that hydrolyzes mischarged Thr-tRNA(Val) in a tRNA-dependent manner. The chain is Valine--tRNA ligase from Protochlamydia amoebophila (strain UWE25).